Reading from the N-terminus, the 51-residue chain is Large ribosomal subunit protein bL33 (51 aa).

It belongs to the bacterial ribosomal protein bL33 family.

In Hahella chejuensis (strain KCTC 2396), this protein is Large ribosomal subunit protein bL33.